A 474-amino-acid chain; its full sequence is MKSIKRVEKVTSHLSDFGQWYTDICLKAELIAYSDVKGFIIYLPYGYALWENIQKYLNYEFQKTGHQNVYFPLVFSEKLFQKEKDHIQGFSPEAAMITSTGQKELFEKLVIRPTSEVLFSQYYAKIISSYRDLPKLYNQFCNVVRWEKATKPFLRGKEFLWQEGHTVHATEKEALDQTLFAIQLYEKLGKELLALPFVCGRKTEKEKFAGALITYSIEALMQDGQALQAGTSHYLGTNFAQSFQIQFQDQDHQNKYVHQTSWGVSTRLIGALIMVHSDDEGLILPPYIAPIQIVIIPLQPKNELVQAEAKKIFDDLKTTYRVHLDLQNKTPGWKFSQYELKGVPLRIEIGARDLAQGEVTIFQRYNNSKNNFSKNTFKAEIPKLLKTIHDKMYQKAQKHLEANRRQASTYQEFKDHLQKKGYVAMSISGMDAEIKIKTETGATARVILETPLITPNCPVTDKKAIQTVLFAKSY.

This sequence belongs to the class-II aminoacyl-tRNA synthetase family. ProS type 3 subfamily. Homodimer.

Its subcellular location is the cytoplasm. The enzyme catalyses tRNA(Pro) + L-proline + ATP = L-prolyl-tRNA(Pro) + AMP + diphosphate. Functionally, catalyzes the attachment of proline to tRNA(Pro) in a two-step reaction: proline is first activated by ATP to form Pro-AMP and then transferred to the acceptor end of tRNA(Pro). In Phytoplasma australiense, this protein is Proline--tRNA ligase.